The primary structure comprises 454 residues: O-phospho-L-seryl-tRNA:Cys-tRNA synthase 2 (454 aa).

Pyridoxal 5'-phosphate-binding positions include A146 to R147, N251, and S274 to H276. An N6-(pyridoxal phosphate)lysine modification is found at K277.

Belongs to the SepCysS family. Homodimer. Interacts with SepRS. It depends on pyridoxal 5'-phosphate as a cofactor.

The enzyme catalyses O-phospho-L-seryl-tRNA(Cys) + hydrogen sulfide + H(+) = L-cysteinyl-tRNA(Cys) + phosphate. In terms of biological role, converts O-phospho-L-seryl-tRNA(Cys) (Sep-tRNA(Cys)) to L-cysteinyl-tRNA(Cys) (Cys-tRNA(Cys)). The chain is O-phospho-L-seryl-tRNA:Cys-tRNA synthase 2 from Methanoregula boonei (strain DSM 21154 / JCM 14090 / 6A8).